Consider the following 468-residue polypeptide: ATP synthase subunit beta (468 aa).

148 to 155 serves as a coordination point for ATP; the sequence is GGAGVGKT.

This sequence belongs to the ATPase alpha/beta chains family. As to quaternary structure, F-type ATPases have 2 components, CF(1) - the catalytic core - and CF(0) - the membrane proton channel. CF(1) has five subunits: alpha(3), beta(3), gamma(1), delta(1), epsilon(1). CF(0) has three main subunits: a(1), b(2) and c(9-12). The alpha and beta chains form an alternating ring which encloses part of the gamma chain. CF(1) is attached to CF(0) by a central stalk formed by the gamma and epsilon chains, while a peripheral stalk is formed by the delta and b chains.

It is found in the cell membrane. It carries out the reaction ATP + H2O + 4 H(+)(in) = ADP + phosphate + 5 H(+)(out). Its function is as follows. Produces ATP from ADP in the presence of a proton gradient across the membrane. The catalytic sites are hosted primarily by the beta subunits. The sequence is that of ATP synthase subunit beta from Stenotrophomonas maltophilia (strain K279a).